The chain runs to 259 residues: Haloacid dehalogenase-like hydrolase domain-containing protein 2 (259 aa).

Residues Asp13 and Ser15 each contribute to the Mg(2+) site. Substrate is bound by residues 13–15 and 46–47; these read DLS and TN. Residues 47–71 adopt a coiled-coil conformation; the sequence is NTTKESKQDLLERLRKLEFDISEDE. Lys50 carries the N6-succinyllysine modification. Substrate is bound at residue Lys179. Asp204 is a binding site for Mg(2+).

It belongs to the HAD-like hydrolase superfamily. Mg(2+) serves as cofactor.

The chain is Haloacid dehalogenase-like hydrolase domain-containing protein 2 (HDHD2) from Pongo abelii (Sumatran orangutan).